A 387-amino-acid polypeptide reads, in one-letter code: Natterin-4 (387 aa).

The signal sequence occupies residues 1–18 (MKLLVLLVTLLVLSWTSA). Positions 19–46 (EDVGDQEILQQHNEDNNHKSELGEAAPQ) are excised as a propeptide. Positions 31-40 (NEDNNHKSEL) are enriched in basic and acidic residues. The tract at residues 31 to 57 (NEDNNHKSELGEAAPQRTDNETSQLGQ) is disordered.

Belongs to the natterin family. Post-translationally, contains 4 disulfide bonds. As to expression, expressed by the venom gland.

It localises to the secreted. With respect to regulation, inhibited by tissue-kallikrein inhibitor TKI and trasylol. Plasma kallikrein inhibitor PKSI527 and classical inhibitors of serine-, metallo-, thiol- or aspartate-peptidases evokes a minor inhibition of the peptide digestion. Shows nociceptive, edema-inducing and kininogenase activity with release of kallidin from low molecular weight kininogen. The cleavage occurs at Met-Lys bonds. This Thalassophryne nattereri (Copper Joe toadfish) protein is Natterin-4.